The following is a 559-amino-acid chain: DNA ligase (559 aa).

Glu247 lines the ATP pocket. Lys249 acts as the N6-AMP-lysine intermediate in catalysis. ATP-binding residues include Arg254, Arg269, Glu299, Phe339, Arg414, and Lys420.

The protein belongs to the ATP-dependent DNA ligase family. Monomer. Mg(2+) serves as cofactor.

The catalysed reaction is ATP + (deoxyribonucleotide)n-3'-hydroxyl + 5'-phospho-(deoxyribonucleotide)m = (deoxyribonucleotide)n+m + AMP + diphosphate.. It carries out the reaction NAD(+) + (deoxyribonucleotide)n-3'-hydroxyl + 5'-phospho-(deoxyribonucleotide)m = (deoxyribonucleotide)n+m + AMP + beta-nicotinamide D-nucleotide.. Functionally, DNA ligase that seals nicks in double-stranded DNA during DNA replication, DNA recombination and DNA repair. Can also use NAD, but less efficiently than ATP. The sequence is that of DNA ligase from Thermococcus kodakarensis (strain ATCC BAA-918 / JCM 12380 / KOD1) (Pyrococcus kodakaraensis (strain KOD1)).